The sequence spans 764 residues: Transient receptor potential cation channel subfamily V member 2 (764 aa).

The tract at residues 1 to 46 (MTSPSSSPVFRLETLDGGQEDGSEADRGKLDFGSGLPPMESQFQGE) is disordered. Residues 1-388 (MTSPSSSPVF…LLQAKWDLLI (388 aa)) form a required for interaction with SLC50A1 region. Residues 1-390 (MTSPSSSPVF…QAKWDLLIPK (390 aa)) lie on the Cytoplasmic side of the membrane. Ser6 is subject to Phosphoserine. 6 ANK repeats span residues 72–114 (NRFD…TEGS), 115–161 (TGKT…DDYY), 162–207 (RGHS…TCFY), 208–243 (FGEL…ATDS), 244–292 (QGNT…IRNL), and 293–319 (QDLT…REFS). Residues 391-411 (FFLNFLCNLIYMFIFTAVAYH) traverse the membrane as a helical segment. The Extracellular portion of the chain corresponds to 412-434 (QPTLKKQAAPHLKAEVGNSMLLT). A helical transmembrane segment spans residues 435 to 455 (GHILILLGGIYLLVGQLWYFW). The Cytoplasmic portion of the chain corresponds to 456–471 (RRHVFIWISFIDSYFE). The helical transmembrane segment at 472–492 (ILFLFQALLTVVSQVLCFLAI) threads the bilayer. Residue Glu493 is a topological domain, extracellular. A helical transmembrane segment spans residues 494–514 (WYLPLLVSALVLGWLNLLYYT). The Cytoplasmic segment spans residues 515–537 (RGFQHTGIYSVMIQKVILRDLLR). A helical transmembrane segment spans residues 538 to 558 (FLLIYLVFLFGFAVALVSLSQ). A disordered region spans residues 562 to 585 (RPEAPTGPNATESVQPMEGQEDEG). N-linked (GlcNAc...) asparagine glycosylation is present at Asn570. The segment at residues 572 to 609 (TESVQPMEGQEDEGNGAQYRGILEASLELFKFTIGMGE) is an intramembrane region (pore-forming). Residues 622–642 (VLLLLLAYVLLTYILLLNMLI) traverse the membrane as a helical segment. The Cytoplasmic portion of the chain corresponds to 643-764 (ALMSETVNSV…YVPVQLLQSN (122 aa)). The tract at residues 725–756 (PSGAGVPRTLENPVLASPPKEDEDGASEENYV) is disordered. Phosphoserine is present on residues Ser751 and Ser763.

Belongs to the transient receptor (TC 1.A.4) family. TrpV subfamily. TRPV2 sub-subfamily. Homotetramer. Interacts with a cAMP-dependent protein kinase type II regulatory subunit (PRKAR2A or PRKAR2B) and ACBD3. Interacts with SLC50A1; the interaction probably occurs intracellularly and depends on TRPV2 N-glycosylation. N-glycosylated. Post-translationally, phosphorylated by PKA.

It localises to the cell membrane. The protein localises to the cytoplasm. Its subcellular location is the melanosome. The catalysed reaction is Ca(2+)(in) = Ca(2+)(out). It catalyses the reaction Mg(2+)(in) = Mg(2+)(out). The enzyme catalyses Na(+)(in) = Na(+)(out). It carries out the reaction K(+)(in) = K(+)(out). In terms of biological role, calcium-permeable, non-selective cation channel with an outward rectification. Seems to be regulated, at least in part, by IGF1, PDGF and neuropeptide head activator. May transduce physical stimuli in mast cells. Activated by temperatures higher than 52 degrees Celsius; is not activated by vanilloids and acidic pH. This Homo sapiens (Human) protein is Transient receptor potential cation channel subfamily V member 2 (TRPV2).